The following is a 477-amino-acid chain: Aspartyl/glutamyl-tRNA(Asn/Gln) amidotransferase subunit B (477 aa).

The protein belongs to the GatB/GatE family. GatB subfamily. As to quaternary structure, heterotrimer of A, B and C subunits.

It catalyses the reaction L-glutamyl-tRNA(Gln) + L-glutamine + ATP + H2O = L-glutaminyl-tRNA(Gln) + L-glutamate + ADP + phosphate + H(+). It carries out the reaction L-aspartyl-tRNA(Asn) + L-glutamine + ATP + H2O = L-asparaginyl-tRNA(Asn) + L-glutamate + ADP + phosphate + 2 H(+). Allows the formation of correctly charged Asn-tRNA(Asn) or Gln-tRNA(Gln) through the transamidation of misacylated Asp-tRNA(Asn) or Glu-tRNA(Gln) in organisms which lack either or both of asparaginyl-tRNA or glutaminyl-tRNA synthetases. The reaction takes place in the presence of glutamine and ATP through an activated phospho-Asp-tRNA(Asn) or phospho-Glu-tRNA(Gln). In Coxiella burnetii (strain CbuK_Q154) (Coxiella burnetii (strain Q154)), this protein is Aspartyl/glutamyl-tRNA(Asn/Gln) amidotransferase subunit B.